The sequence spans 266 residues: Putative carbamate hydrolase RutD (266 aa).

It belongs to the AB hydrolase superfamily. Hydrolase RutD family.

The enzyme catalyses carbamate + 2 H(+) = NH4(+) + CO2. In terms of biological role, involved in pyrimidine catabolism. May facilitate the hydrolysis of carbamate, a reaction that can also occur spontaneously. This is Putative carbamate hydrolase RutD from Escherichia coli O157:H7.